Consider the following 800-residue polypeptide: DNA topoisomerase 4 subunit A (800 aa).

The 465-residue stretch at 31–495 (LPDVRDGLKP…EIEEIKIDKE (465 aa)) folds into the Topo IIA-type catalytic domain. Y119 serves as the catalytic O-(5'-phospho-DNA)-tyrosine intermediate.

It belongs to the type II topoisomerase GyrA/ParC subunit family. ParC type 2 subfamily. In terms of assembly, heterotetramer composed of ParC and ParE.

It is found in the cell membrane. The enzyme catalyses ATP-dependent breakage, passage and rejoining of double-stranded DNA.. In terms of biological role, topoisomerase IV is essential for chromosome segregation. It relaxes supercoiled DNA. Performs the decatenation events required during the replication of a circular DNA molecule. The polypeptide is DNA topoisomerase 4 subunit A (Staphylococcus aureus (strain MSSA476)).